A 1043-amino-acid polypeptide reads, in one-letter code: Probable inorganic carbon transporter subunit DabA (1043 aa).

Cys-460, Asp-462, His-719, and Cys-734 together coordinate Zn(2+).

It belongs to the inorganic carbon transporter (TC 9.A.2) DabA family. In terms of assembly, forms a complex with DabB. Zn(2+) is required as a cofactor.

It localises to the cell inner membrane. Functionally, part of an energy-coupled inorganic carbon pump. In Thiobacillus denitrificans (strain ATCC 25259 / T1), this protein is Probable inorganic carbon transporter subunit DabA.